We begin with the raw amino-acid sequence, 426 residues long: Serine--tRNA ligase (426 aa).

233-235 (TSE) contacts L-serine. 264 to 266 (RSE) contacts ATP. Residue glutamate 287 participates in L-serine binding. 351–354 (EISS) is a binding site for ATP. Residue serine 387 participates in L-serine binding.

The protein belongs to the class-II aminoacyl-tRNA synthetase family. Type-1 seryl-tRNA synthetase subfamily. As to quaternary structure, homodimer. The tRNA molecule binds across the dimer.

It localises to the cytoplasm. The catalysed reaction is tRNA(Ser) + L-serine + ATP = L-seryl-tRNA(Ser) + AMP + diphosphate + H(+). It carries out the reaction tRNA(Sec) + L-serine + ATP = L-seryl-tRNA(Sec) + AMP + diphosphate + H(+). It functions in the pathway aminoacyl-tRNA biosynthesis; selenocysteinyl-tRNA(Sec) biosynthesis; L-seryl-tRNA(Sec) from L-serine and tRNA(Sec): step 1/1. Its function is as follows. Catalyzes the attachment of serine to tRNA(Ser). Is also able to aminoacylate tRNA(Sec) with serine, to form the misacylated tRNA L-seryl-tRNA(Sec), which will be further converted into selenocysteinyl-tRNA(Sec). In Xylella fastidiosa (strain M12), this protein is Serine--tRNA ligase.